Here is a 787-residue protein sequence, read N- to C-terminus: Endonuclease MutS2 (787 aa).

329–336 provides a ligand contact to ATP; sequence GPNTGGKT. One can recognise a Smr domain in the interval 712–787; the sequence is INLLGCTVDE…DAGVTIVDFK (76 aa).

The protein belongs to the DNA mismatch repair MutS family. MutS2 subfamily. As to quaternary structure, homodimer. Binds to stalled ribosomes, contacting rRNA.

Functionally, endonuclease that is involved in the suppression of homologous recombination and thus may have a key role in the control of bacterial genetic diversity. In terms of biological role, acts as a ribosome collision sensor, splitting the ribosome into its 2 subunits. Detects stalled/collided 70S ribosomes which it binds and splits by an ATP-hydrolysis driven conformational change. Acts upstream of the ribosome quality control system (RQC), a ribosome-associated complex that mediates the extraction of incompletely synthesized nascent chains from stalled ribosomes and their subsequent degradation. Probably generates substrates for RQC. This chain is Endonuclease MutS2, found in Lachnospira eligens (strain ATCC 27750 / DSM 3376 / VPI C15-48 / C15-B4) (Eubacterium eligens).